Here is a 74-residue protein sequence, read N- to C-terminus: U12-theraphotoxin-Hs1a (74 aa).

Residues Met1–Ala20 form the signal peptide. Positions Thr21–Arg40 are excised as a propeptide. Disulfide bonds link Cys42–Cys56, Cys49–Cys61, and Cys55–Cys71.

It belongs to the neurotoxin 35 family. In terms of tissue distribution, expressed by the venom gland.

The protein resides in the secreted. In terms of biological role, putative ion channel inhibitor. The protein is U12-theraphotoxin-Hs1a of Cyriopagopus schmidti (Chinese bird spider).